A 758-amino-acid polypeptide reads, in one-letter code: Ferrichrome receptor FcuA (758 aa).

The N-terminal stretch at 1 to 36 (MNQTISSRAPQKRLAPRLLCVMIGAALGTLSASSWA) is a signal peptide. The short motif at 66–73 (DTITVVGA) is the TonB box element. A TBDR plug domain is found at 106–216 (DARNVPFNVI…VGGMINLEPK (111 aa)). Positions 221 to 758 (TPLTRVTVDY…ALKLSVSMDF (538 aa)) constitute a TBDR beta-barrel domain. The TonB C-terminal box motif lies at 741 to 758 (YIYQGDPRALKLSVSMDF).

This sequence belongs to the TonB-dependent receptor family.

Its subcellular location is the cell outer membrane. Its function is as follows. Receptor for the hydroxamate siderophore, ferrichrome. Binds also to most other ferrichrome derivatives except enantio ferrichrome and ferric rhodotorulate. The protein is Ferrichrome receptor FcuA (fcuA) of Yersinia enterocolitica.